A 346-amino-acid polypeptide reads, in one-letter code: Biotin synthase (346 aa).

Positions K38 to T256 constitute a Radical SAM core domain. [4Fe-4S] cluster is bound by residues C53, C57, and C60. Residues C97, C128, C188, and R260 each coordinate [2Fe-2S] cluster.

Belongs to the radical SAM superfamily. Biotin synthase family. In terms of assembly, homodimer. It depends on [4Fe-4S] cluster as a cofactor. The cofactor is [2Fe-2S] cluster.

The catalysed reaction is (4R,5S)-dethiobiotin + (sulfur carrier)-SH + 2 reduced [2Fe-2S]-[ferredoxin] + 2 S-adenosyl-L-methionine = (sulfur carrier)-H + biotin + 2 5'-deoxyadenosine + 2 L-methionine + 2 oxidized [2Fe-2S]-[ferredoxin]. It participates in cofactor biosynthesis; biotin biosynthesis; biotin from 7,8-diaminononanoate: step 2/2. In terms of biological role, catalyzes the conversion of dethiobiotin (DTB) to biotin by the insertion of a sulfur atom into dethiobiotin via a radical-based mechanism. This chain is Biotin synthase, found in Salmonella arizonae (strain ATCC BAA-731 / CDC346-86 / RSK2980).